Here is a 216-residue protein sequence, read N- to C-terminus: Penicillin-binding protein activator LpoB (216 aa).

Positions 1–20 (MIKNLSRYALVTAFALFLSG) are cleaved as a signal peptide. Residue cysteine 21 is the site of N-palmitoyl cysteine attachment. Cysteine 21 carries the S-diacylglycerol cysteine lipid modification. Residues 28–77 (QPAPVDEAKPGTEQPAQPTQPVPTVPSVPTVPAQPGPIEHPDQTSQPAPR) form a disordered region.

It belongs to the LpoB family. Interacts with PBP1b.

It localises to the cell outer membrane. Regulator of peptidoglycan synthesis that is essential for the function of penicillin-binding protein 1B (PBP1b). This chain is Penicillin-binding protein activator LpoB, found in Enterobacter sp. (strain 638).